A 133-amino-acid polypeptide reads, in one-letter code: Glycine cleavage system H protein (133 aa).

The Lipoyl-binding domain occupies 30–112 (TITVGITHHA…YGAGWFFKIK (83 aa)). K71 carries the post-translational modification N6-lipoyllysine.

The protein belongs to the GcvH family. In terms of assembly, the glycine cleavage system is composed of four proteins: P, T, L and H. The cofactor is (R)-lipoate.

The glycine cleavage system catalyzes the degradation of glycine. The H protein shuttles the methylamine group of glycine from the P protein to the T protein. The chain is Glycine cleavage system H protein from Neisseria gonorrhoeae (strain ATCC 700825 / FA 1090).